The following is a 279-amino-acid chain: Energy-coupling factor transporter ATP-binding protein EcfA2 (279 aa).

The ABC transporter domain occupies 3–245; it reads IALENVNFIY…VVFMEEVQLG (243 aa). 40–47 provides a ligand contact to ATP; sequence GHTGSGKS.

This sequence belongs to the ABC transporter superfamily. Energy-coupling factor EcfA family. In terms of assembly, forms a stable energy-coupling factor (ECF) transporter complex composed of 2 membrane-embedded substrate-binding proteins (S component), 2 ATP-binding proteins (A component) and 2 transmembrane proteins (T component).

It is found in the cell membrane. In terms of biological role, ATP-binding (A) component of a common energy-coupling factor (ECF) ABC-transporter complex. Unlike classic ABC transporters this ECF transporter provides the energy necessary to transport a number of different substrates. In Streptococcus pneumoniae serotype 2 (strain D39 / NCTC 7466), this protein is Energy-coupling factor transporter ATP-binding protein EcfA2.